Here is a 209-residue protein sequence, read N- to C-terminus: Dual-specificity protein phosphatase SDP1 (209 aa).

Over residues 1–11 (MNIYTSPTRTP) the composition is skewed to polar residues. Residues 1–43 (MNIYTSPTRTPNIAPKSGQRPSLPMLATDERSTDKESPNEDRE) form a disordered region. Positions 28-43 (TDERSTDKESPNEDRE) are enriched in basic and acidic residues. A disulfide bond links cysteine 47 and cysteine 142. A Tyrosine-protein phosphatase domain is found at 59 to 196 (GPLLVLPEKI…LMEWEVALNA (138 aa)). Histidine 111 lines the 4-O-phospho-L-tyrosine pocket. The active-site Phosphocysteine intermediate is cysteine 140.

It belongs to the protein-tyrosine phosphatase family. Non-receptor class dual specificity subfamily.

The catalysed reaction is O-phospho-L-tyrosyl-[protein] + H2O = L-tyrosyl-[protein] + phosphate. Mediates dephosphorylation of MAPK substrates such as SLT2, acquiring enhanced catalytic activity under oxidative conditions. The protein is Dual-specificity protein phosphatase SDP1 (SDP1) of Saccharomyces cerevisiae (strain ATCC 204508 / S288c) (Baker's yeast).